A 278-amino-acid chain; its full sequence is Beta-lactamase-like protein str5 (278 aa).

Residues V20–T37 traverse the membrane as a helical segment. N112 is a glycosylation site (N-linked (GlcNAc...) asparagine).

The protein belongs to the beta-lactamase family.

Its subcellular location is the membrane. It participates in mycotoxin biosynthesis. Beta-lactamase-like protein; part of the gene cluster that mediates the biosynthesis of strobilurin A, an antifungal polyketide that contains a key beta-methoxyacrylate toxophore that targets the complex III of the mitochondrial electron transport chain. Strobilurin biosynthesis begins with construction of benzoyl CoA by step-wise elimination of ammonia from phenylalanine by the phenylalanine ammonia-lyase str11, oxygenation by str8 and retro-Claisen reaction to form benzoic acid, which is activated to its CoA thiolester benzoyl CoA by the dedicated CoA ligase str10. Benzoyl CoA forms the starter unit for the highly reducing polyketide synthase stpks1 that produces the polyketide prestrobilutin A. The FAD-dependent oxygenase str9 then catalyzes the key oxidative rearrangement responsible for the creation of the beta-methoxyacrylate toxophore. Str9 performs epoxidation of the 2,3 olefin of prestrobilutin A, followed by Meinwald rearrangement to furnish the aldehyde intermediate. Rapid enolization of the aldehyde intermediate would give the beta-methoxyacrylate skeleton and methylations catalyzed by str2 and str3 complete the synthesis and lead to the production of strobilurin A. The short-chain dehydrogenase stl2 and the dehydrogenase str4 play a role in the shunt pathway leading to the production of bolineol. The cluster encodes no obvious halogenase gene that could be involved in production of strobilurin B, nor any obvious dimethylallyl-transferase that could be involved in the production of strobilurin G. It is possible that unknown proteins encoded in, or near, the cluster (such as str1 or stl1) may form new classes of halogenases or dimethylally-transferases, or that the responsible genes are located elsewhere on the genome. Similarly, proteins encoded by str5/str6 hydrolases appear to have no chemical role in the biosynthesis of strobilurin A. Finally, no obvious self-resistance gene is found within the cluster. The sequence is that of Beta-lactamase-like protein str5 from Strobilurus tenacellus.